A 569-amino-acid polypeptide reads, in one-letter code: Anti-Muellerian hormone type-2 receptor (569 aa).

The signal sequence occupies residues 1–17 (MLGTLGLWALLPAAVQA). The Extracellular portion of the chain corresponds to 18–148 (PPNRRTCVFF…AAPGESPWMA (131 aa)). 2 disulfide bridges follow: Cys-55–Cys-79 and Cys-92–Cys-109. N-linked (GlcNAc...) asparagine glycosylation is present at Asn-66. Asn-119 carries an N-linked (GlcNAc...) asparagine glycan. Residues 149 to 169 (LALLGLVLLLLLLLGGIVVAL) form a helical membrane-spanning segment. Topologically, residues 170-569 (LQRKAYRVQS…PGAACASSDV (400 aa)) are cytoplasmic. The Protein kinase domain maps to 201 to 511 (LCFSQVIREG…RLVALVHPQE (311 aa)). ATP contacts are provided by residues 207–215 (IREGGHAAV) and Lys-228. Asp-331 (proton acceptor) is an active-site residue. Positions 512-535 (AQPCPEGRPHSHPEDWPPAPAPAP) are disordered.

It belongs to the protein kinase superfamily. TKL Ser/Thr protein kinase family. TGFB receptor subfamily. As to quaternary structure, interacts with type I receptor ACVR1. Mg(2+) serves as cofactor. The cofactor is Mn(2+).

It localises to the membrane. The enzyme catalyses L-threonyl-[receptor-protein] + ATP = O-phospho-L-threonyl-[receptor-protein] + ADP + H(+). It carries out the reaction L-seryl-[receptor-protein] + ATP = O-phospho-L-seryl-[receptor-protein] + ADP + H(+). On ligand binding, forms a receptor complex consisting of two type II and two type I transmembrane serine/threonine kinases. Type II receptors phosphorylate and activate type I receptors which autophosphorylate, then bind and activate SMAD transcriptional regulators. Receptor for anti-Muellerian hormone. The sequence is that of Anti-Muellerian hormone type-2 receptor (AMHR2) from Oryctolagus cuniculus (Rabbit).